The primary structure comprises 158 residues: Transcription elongation factor GreA (158 aa).

Belongs to the GreA/GreB family.

Its function is as follows. Necessary for efficient RNA polymerase transcription elongation past template-encoded arresting sites. The arresting sites in DNA have the property of trapping a certain fraction of elongating RNA polymerases that pass through, resulting in locked ternary complexes. Cleavage of the nascent transcript by cleavage factors such as GreA or GreB allows the resumption of elongation from the new 3'terminus. GreA releases sequences of 2 to 3 nucleotides. In Ralstonia nicotianae (strain ATCC BAA-1114 / GMI1000) (Ralstonia solanacearum), this protein is Transcription elongation factor GreA.